Here is a 182-residue protein sequence, read N- to C-terminus: Troponin I, fast skeletal muscle (182 aa).

G2 is modified (N-acetylglycine). The tract at residues 2–48 (GDEEKRNRAITARRQHLKSVMLQIAATELEKEESRREAEKQNYLAEH) is involved in binding TNC. T12 is subject to Phosphothreonine. Residues 97–117 (NQKLFDLRGKFKRPPLRRVRM) are involved in binding TNC and actin. A Phosphoserine modification is found at S118.

Belongs to the troponin I family. Binds to actin and tropomyosin.

In terms of biological role, troponin I is the inhibitory subunit of troponin, the thin filament regulatory complex which confers calcium-sensitivity to striated muscle actomyosin ATPase activity. The protein is Troponin I, fast skeletal muscle (TNNI2) of Homo sapiens (Human).